We begin with the raw amino-acid sequence, 275 residues long: Transcriptional coregulator psa-3 (275 aa).

One can recognise an MEIS N-terminal domain in the interval 91 to 161; the sequence is TDDIKRLFQS…RRTVCHEALV (71 aa). The segment at 239–275 is disordered; sequence QLPPNFLKPSNEKSPEKSEEEKSQKPSSSPKSPSLSD. A compositionally biased stretch (basic and acidic residues) spans 248–262; it reads SNEKSPEKSEEEKSQ. The segment covering 263–275 has biased composition (low complexity); sequence KPSSSPKSPSLSD.

As to quaternary structure, interacts with homeobox protein ceh-20; the interaction is direct, facilitates nuclear localization of ceh-20 and may stabilize interaction of a ceh-20-nob-1 complex with DNA.

Its subcellular location is the nucleus. In terms of biological role, probable transcription coregulator. Required for asymmetric cell divisions of the T hypodermal cells, and cell fate determination, in concert with homeobox proteins nob-1 and ceh-20. Acts downstream of the Wnt signaling pathway, and of ceh-20 and nob-1. In Caenorhabditis elegans, this protein is Transcriptional coregulator psa-3.